The following is a 908-amino-acid chain: Alanine--tRNA ligase (908 aa).

Residues His-596, His-600, Cys-698, and His-702 each coordinate Zn(2+).

Belongs to the class-II aminoacyl-tRNA synthetase family. It depends on Zn(2+) as a cofactor.

Its subcellular location is the cytoplasm. It catalyses the reaction tRNA(Ala) + L-alanine + ATP = L-alanyl-tRNA(Ala) + AMP + diphosphate. Its function is as follows. Catalyzes the attachment of alanine to tRNA(Ala) in a two-step reaction: alanine is first activated by ATP to form Ala-AMP and then transferred to the acceptor end of tRNA(Ala). Also edits incorrectly charged Ser-tRNA(Ala) and Gly-tRNA(Ala) via its editing domain. This Lysinibacillus sphaericus (strain C3-41) protein is Alanine--tRNA ligase.